Reading from the N-terminus, the 302-residue chain is Protein transport protein SEC13 homolog B (302 aa).

6 WD repeats span residues 9–48, 54–95, 101–142, 148–201, 208–251, and 257–296; these read GHED…GSQQ, GHRG…QWTQ, DHKS…GWDT, AHPV…WKMD, KHTD…EQWE, and DFMT…EWEQ.

It belongs to the WD repeat SEC13 family. Part of the nuclear pore complex (NPC). The NPC has an eight-fold symmetrical structure comprising a central transport channel and two rings, the cytoplasmic and nuclear rings, to which eight filaments are attached. The cytoplasmic filaments have loose ends, while the nuclear filaments are joined in a distal ring, forming a nuclear basket. NPCs are highly dynamic in configuration and composition, and can be devided in 3 subcomplexes, the NUP62 subcomplex, the NUP107-160 subcomplex and the NUP93 subcomplex, containing approximately 30 different nucleoporin proteins. Interacts with MAG5, SEC31A and SEC31B.

Its subcellular location is the golgi apparatus. It is found in the endoplasmic reticulum. It localises to the nucleus envelope. The protein localises to the nucleus. The protein resides in the nuclear pore complex. Functionally, required for protein transport from the endoplasmic reticulum to the Golgi apparatus. In Arabidopsis thaliana (Mouse-ear cress), this protein is Protein transport protein SEC13 homolog B.